The sequence spans 1362 residues: Bromodomain-containing protein 4 (1362 aa).

The interval 1–58 is disordered; the sequence is MSAESGPGTRLRNLPVMGDGLETSQMSTTQAQAQPQPANAASTNPPPPETSNPNKPKR. Low complexity predominate over residues 23–43; that stretch reads TSQMSTTQAQAQPQPANAAST. In terms of domain architecture, Bromo 1 spans 58 to 164; the sequence is RQTNQLQYLL…KLFLQKINEL (107 aa). Residue Lys99 forms a Glycyl lysine isopeptide (Lys-Gly) (interchain with G-Cter in SUMO2) linkage. 3 disordered regions span residues 174 to 229, 242 to 352, and 463 to 615; these read VQAK…PAVT, VPPQ…KVSE, and EPVV…YEEK. Residues 197–211 are compositionally biased toward low complexity; that stretch reads PNTTQASTPPQTQTP. Composition is skewed to pro residues over residues 212–227 and 243–266; these read QPNP…PFPA and PPQP…PAPQ. Over residues 320–336 the composition is skewed to basic and acidic residues; that stretch reads QRRESSRPVKPPKKDVP. Positions 348–457 constitute a Bromo 2 domain; the sequence is SKVSEQLKCC…DVFEMRFAKM (110 aa). Ser470 is modified (phosphoserine). The segment covering 478-497 has biased composition (low complexity); that stretch reads KVVAPPSSSDSSSDSSSDSD. Phosphoserine; by CK2 occurs at positions 484, 488, 492, 494, 498, 499, and 503. An NPS region region spans residues 484–503; that stretch reads SSSDSSSDSSSDSDSSTDDS. A BID region region spans residues 524 to 579; it reads QLAALSQPQQNKPKKKEKDKKEKKKEKHKRKEEVEENKKSKAKEPPPKKTKKNNSS. Residues 535-553 are compositionally biased toward basic residues; it reads KPKKKEKDKKEKKKEKHKR. Basic and acidic residues predominate over residues 554–570; that stretch reads KEEVEENKKSKAKEPPP. Lys585 is covalently cross-linked (Glycyl lysine isopeptide (Lys-Gly) (interchain with G-Cter in SUMO2)). In terms of domain architecture, NET spans 600–682; it reads ESEEEDKCKP…SCLRKKRKPQ (83 aa). Residue Ser601 is modified to Phosphoserine. A compositionally biased stretch (basic and acidic residues) spans 605–615; that stretch reads DKCKPMSYEEK. Residues Lys645 and Lys694 each participate in a glycyl lysine isopeptide (Lys-Gly) (interchain with G-Cter in SUMO2) cross-link. Residues 674-1100 are disordered; it reads CLRKKRKPQA…PKKQELRAAS (427 aa). Low complexity predominate over residues 699 to 712; sequence SSSESESSSESSSS. Positions 724–744 are enriched in basic residues; sequence KSKKKGHPGREQKKHHHHHHQ. Pro residues-rich tracts occupy residues 751 to 785, 833 to 846, and 881 to 890; these read APVP…PPSM, PELP…PEHS, and PPKPARPPAV. Over residues 926 to 936 the composition is skewed to low complexity; that stretch reads MQMQLYLQQLQ. Pro residues-rich tracts occupy residues 953–964, 973–996, and 1010–1034; these read QPPPPLPPPPHP, QPPP…PPRP, and QPPP…PQPA. Residues 1041–1050 show a composition bias toward basic residues; sequence QHHHSPRHHK. A C-terminal (CTD) region region spans residues 1047-1362; it reads RHHKSDPYST…LLSIFEENLF (316 aa). Lys1050 is covalently cross-linked (Glycyl lysine isopeptide (Lys-Gly) (interchain with G-Cter in SUMO2)). The segment covering 1071 to 1091 has biased composition (polar residues); it reads PQMSQFQSLTHQSPPQQNVQP. N6-acetyllysine; alternate is present on Lys1111. Lys1111 participates in a covalent cross-link: Glycyl lysine isopeptide (Lys-Gly) (interchain with G-Cter in SUMO1); alternate. Residue Lys1111 forms a Glycyl lysine isopeptide (Lys-Gly) (interchain with G-Cter in SUMO2); alternate linkage. The interval 1116 to 1339 is disordered; it reads HSPIIRSEPF…KREQERRRRE (224 aa). Ser1117 and Ser1126 each carry phosphoserine. Over residues 1175 to 1196 the composition is skewed to basic and acidic residues; sequence PDKDKQKQEPKTPVAPKKDLKI. Lys1197 is covalently cross-linked (Glycyl lysine isopeptide (Lys-Gly) (interchain with G-Cter in SUMO2)). Phosphoserine occurs at positions 1201 and 1204. Over residues 1211–1223 the composition is skewed to low complexity; the sequence is TTPSSTAKSSSDS. Over residues 1225 to 1284 the composition is skewed to basic and acidic residues; it reads EQFRRAAREKEEREKALKAQAEHAEKEKERLRQERMRSREDEDALEQARRAHEEARRRQE. A compositionally biased stretch (low complexity) spans 1285 to 1313; sequence QQQQQRQEQQQQQQQQAAAVAAAATPQAQ. A compositionally biased stretch (basic and acidic residues) spans 1323–1339; that stretch reads QQRELARKREQERRRRE.

Belongs to the BET family. Interacts with p53/TP53; the interaction is direct. Interacts (via CTD region) with CDK9 and CCNT1, acting as an associated component of P-TEFb complex. Interacts with RELA (when acetylated at 'Lys-310'). Interacts (via NET domain) with NSD3, CHD4, BICRA and ATAD5. The interaction with BICRA bridges BRD4 to the GBAF complex. Interacts (via NET domain) with JMJD6 (via JmjC and N-terminal domains); the interaction is stronger in presence of ssRNA and recruits JMJD6 on distal enhancers. Interacts with NSD3. Interacts with NIPBL. As to quaternary structure, interacts with SMC2. Interacts with NCAPD3. In terms of assembly, (Microbial infection) Interacts with bovine papillomavirus type 1 regulatory protein E2. This interactions may serve for the tethering of viral genomes to host mitotic chromosomes allowing successful partitioning of the viral genome during cell division. (Microbial infection) Interacts with Epstein-Barr virus (EBV) protein EBNA1; this interaction facilitates transcriptional activation by EBNA1. As to quaternary structure, (Microbial infection) Interacts with human herpes virus-8 (HHV-8) protein LANA. Phosphorylation by CK2 disrupt the intramolecular binding between the bromo domain 2 and the NPS region and promotes binding between the NPS and the BID regions, leading to activate the protein and promote binding to acetylated histones. In absence of phosphorylation, BRD4 does not localize to p53/TP53 target gene promoters, phosphorylation promoting recruitment to p53/TP53 target promoters. In terms of tissue distribution, ubiquitously expressed.

It is found in the nucleus. Its subcellular location is the chromosome. Inhibited by JQ1, a thieno-triazolo-1,4-diazepine derivative, which specifically inhibits members of the BET family (BRD2, BRD3 and BRD4). The first bromo domain is inhibited by GSK778 (iBET-BD1), which specifically inhibits the first bromo domain of members of the BET family (BRD2, BRD3 and BRD4). The second bromo domain is inhibited by ABBV-744, which specifically inhibits the second bromo domain of members of the BET family (BRD2, BRD3 and BRD4). The second bromo domain is inhibited by GSK046 (iBET-BD2), which specifically inhibits the second bromo domain of members of the BET family (BRD2, BRD3 and BRD4). Chromatin reader protein that recognizes and binds acetylated histones and plays a key role in transmission of epigenetic memory across cell divisions and transcription regulation. Remains associated with acetylated chromatin throughout the entire cell cycle and provides epigenetic memory for postmitotic G1 gene transcription by preserving acetylated chromatin status and maintaining high-order chromatin structure. During interphase, plays a key role in regulating the transcription of signal-inducible genes by associating with the P-TEFb complex and recruiting it to promoters. Also recruits P-TEFb complex to distal enhancers, so called anti-pause enhancers in collaboration with JMJD6. BRD4 and JMJD6 are required to form the transcriptionally active P-TEFb complex by displacing negative regulators such as HEXIM1 and 7SKsnRNA complex from P-TEFb, thereby transforming it into an active form that can then phosphorylate the C-terminal domain (CTD) of RNA polymerase II. Regulates differentiation of naive CD4(+) T-cells into T-helper Th17 by promoting recruitment of P-TEFb to promoters. Promotes phosphorylation of 'Ser-2' of the C-terminal domain (CTD) of RNA polymerase II. According to a report, directly acts as an atypical protein kinase and mediates phosphorylation of 'Ser-2' of the C-terminal domain (CTD) of RNA polymerase II; these data however need additional evidences in vivo. In addition to acetylated histones, also recognizes and binds acetylated RELA, leading to further recruitment of the P-TEFb complex and subsequent activation of NF-kappa-B. Also acts as a regulator of p53/TP53-mediated transcription: following phosphorylation by CK2, recruited to p53/TP53 specific target promoters. Its function is as follows. Acts as a chromatin insulator in the DNA damage response pathway. Inhibits DNA damage response signaling by recruiting the condensin-2 complex to acetylated histones, leading to chromatin structure remodeling, insulating the region from DNA damage response by limiting spreading of histone H2AX/H2A.x phosphorylation. This Homo sapiens (Human) protein is Bromodomain-containing protein 4 (BRD4).